The primary structure comprises 340 residues: Extracellular matrix protein-binding protein emp (340 aa).

The signal sequence occupies residues Met1 to Ala26.

Its subcellular location is the cell surface. In terms of biological role, adhesin that binds to the host cell extracellular matrix proteins fibronectin, fibrinogen, collagen, and vitronectin. The chain is Extracellular matrix protein-binding protein emp (emp) from Staphylococcus aureus (strain Mu50 / ATCC 700699).